A 2034-amino-acid chain; its full sequence is Pecanex-like protein 3 (2034 aa).

2 consecutive transmembrane segments (helical) span residues 33-53 (CFHL…YMVL) and 54-74 (PPSL…FATI). Residues 96–118 (STMGELEEEPAQGDSNPPRDPGV) are disordered. Residue serine 127 is modified to Phosphoserine. Threonine 129 bears the Phosphothreonine mark. 3 disordered regions span residues 193–242 (IGDL…PLLK), 260–517 (DRAL…LRPP), and 540–625 (VLPA…SHSR). A compositionally biased stretch (polar residues) spans 294-303 (KAGSSDSCFS). The span at 305–319 (TDRETLSSFKSEKTN) shows a compositional bias: basic and acidic residues. Asparagine 319 carries N-linked (GlcNAc...) asparagine glycosylation. Threonine 370 is modified (phosphothreonine). Positions 391 to 409 (PSKRQPPLRRHSPPGRAPR) are enriched in basic residues. A phosphoserine mark is found at serine 392 and serine 431. Over residues 427–436 (GSELSPASSL) the composition is skewed to polar residues. The span at 444-460 (TDSSSSTSCYSPESSRG) shows a compositional bias: low complexity. Positions 488-497 (TQRTPSTASA) are enriched in polar residues. Phosphoserine is present on serine 505. The next 7 membrane-spanning stretches (helical) occupy residues 790–812 (VLEN…LLLL), 819–836 (IWVF…YSLL), 852–872 (WVIA…IWLL), 880–900 (PFPP…FFCA), 903–923 (VATV…LPQV), 946–968 (SPLT…YGFC), and 980–1000 (HVPV…YHLS). Serine 1025 is modified (phosphoserine). The next 4 helical transmembrane spans lie at 1053-1073 (LVMC…TVFI), 1078-1098 (VLGF…HYLL), 1244-1264 (FVLT…HAFA), and 1280-1300 (LLSG…VFIM). Serine 1697 bears the Phosphoserine mark. The N-linked (GlcNAc...) asparagine glycan is linked to asparagine 1770. Residues 1844–2034 (GGLTSLSNNP…AAQPLLEHQY (191 aa)) form a disordered region. Positions 1890-1910 (RPPPLLQWPPPRLPGPPPASP) are enriched in pro residues. Phosphoserine is present on serine 1909. Over residues 1925–1939 (GLLSSEGPSGKWSLG) the composition is skewed to low complexity. Serine 1955 bears the Phosphoserine mark. Positions 1969–1978 (LSLSLSLSLS) are enriched in low complexity.

This sequence belongs to the pecanex family.

The protein resides in the membrane. In Homo sapiens (Human), this protein is Pecanex-like protein 3.